The sequence spans 132 residues: Keratin, high-sulfur matrix protein, IIIA3 (132 aa).

The keratin products of mammalian epidermal derivatives such as wool and hair consist of microfibrils embedded in a rigid matrix of other proteins. The matrix proteins include the high-sulfur and high-tyrosine keratins, having molecular weights of 6-20 kDa, whereas the microfibrils contain the larger, low-sulfur keratins (40-56 kDa). The sequence is that of Keratin, high-sulfur matrix protein, IIIA3 from Capra hircus (Goat).